A 274-amino-acid chain; its full sequence is Sulfur carrier protein FdhD (274 aa).

Cys-121 serves as the catalytic Cysteine persulfide intermediate. A Mo-bis(molybdopterin guanine dinucleotide)-binding site is contributed by Phe-258 to Arg-263.

The protein belongs to the FdhD family.

It localises to the cytoplasm. Functionally, required for formate dehydrogenase (FDH) activity. Acts as a sulfur carrier protein that transfers sulfur from IscS to the molybdenum cofactor prior to its insertion into FDH. This Yersinia pseudotuberculosis serotype O:3 (strain YPIII) protein is Sulfur carrier protein FdhD.